The following is an 875-amino-acid chain: Acetyl-coenzyme A carboxylase carboxyl transferase subunit alpha, chloroplastic (875 aa).

The transit peptide at 1–50 (MASSSATLVGSTASDLLRSSTTGFTGVPLRTLGRAGLVLKRRDLTVSVTA) directs the protein to the chloroplast. The region spanning 128–380 (EAKYQKALVE…KIAINEAMDE (253 aa)) is the CoA carboxyltransferase C-terminal domain. Residues 664-705 (LLLDKNKAATRKQELKKKSDEHKEAARLEQELKKKFDEVMDT) are a coiled coil. The interval 845 to 875 (KEKYENLTRPAGDTLTDDKLREKVGVNRNFS) is disordered. Basic and acidic residues predominate over residues 860-869 (TDDKLREKVG).

Belongs to the AccA family. In terms of assembly, acetyl-CoA carboxylase is a heterohexamer composed of biotin carboxyl carrier protein, biotin carboxylase and two subunits each of ACCase subunit alpha and ACCase plastid-coded subunit beta (accD).

The protein localises to the plastid. Its subcellular location is the chloroplast inner membrane. It catalyses the reaction N(6)-carboxybiotinyl-L-lysyl-[protein] + acetyl-CoA = N(6)-biotinyl-L-lysyl-[protein] + malonyl-CoA. The protein operates within lipid metabolism; malonyl-CoA biosynthesis; malonyl-CoA from acetyl-CoA: step 1/1. Its activity is regulated as follows. Activated by reductants such as dithiothreitol (DTT), and by thioredoxin in vivo, following exposure to light. Functionally, component of the acetyl coenzyme A carboxylase (ACC) complex. First, biotin carboxylase catalyzes the carboxylation of biotin on its carrier protein (BCCP) and then the CO(2) group is transferred by the carboxyltransferase to acetyl-CoA to form malonyl-CoA. The protein is Acetyl-coenzyme A carboxylase carboxyl transferase subunit alpha, chloroplastic (ACCA) of Pisum sativum (Garden pea).